Consider the following 514-residue polypeptide: Peptide chain release factor 3 (514 aa).

The tr-type G domain maps to 8 to 268 (KKRRTFAIIS…IFLKFAPEPH (261 aa)). GTP-binding positions include 17 to 24 (SHPDAGKT), 85 to 89 (DTPGH), and 139 to 142 (NKLD).

It belongs to the TRAFAC class translation factor GTPase superfamily. Classic translation factor GTPase family. PrfC subfamily.

It localises to the cytoplasm. Increases the formation of ribosomal termination complexes and stimulates activities of RF-1 and RF-2. It binds guanine nucleotides and has strong preference for UGA stop codons. It may interact directly with the ribosome. The stimulation of RF-1 and RF-2 is significantly reduced by GTP and GDP, but not by GMP. This chain is Peptide chain release factor 3, found in Streptococcus pneumoniae (strain P1031).